A 468-amino-acid polypeptide reads, in one-letter code: Tyrosine-protein phosphatase YopH (468 aa).

Residues 127-194 (ARGHVSSHSH…TVSPYGPEAR (68 aa)) form a disordered region. Over residues 130–140 (HVSSHSHSVLH) the composition is skewed to low complexity. The Tyrosine-protein phosphatase domain maps to 152 to 461 (SHLDPRTPPL…DVLIKLAEGQ (310 aa)). The Phosphocysteine intermediate role is filled by C403.

This sequence belongs to the protein-tyrosine phosphatase family. Non-receptor class subfamily. In terms of assembly, monomer.

The protein localises to the secreted. The catalysed reaction is O-phospho-L-tyrosyl-[protein] + H2O = L-tyrosyl-[protein] + phosphate. In terms of biological role, essential virulence determinant. This protein is a protein tyrosine phosphatase. The essential function of YopH in Yersinia pathogenesis is host-protein dephosphorylation. It contributes to the ability of the bacteria to resist phagocytosis by peritoneal macrophages. The sequence is that of Tyrosine-protein phosphatase YopH (yopH) from Yersinia enterocolitica.